The sequence spans 571 residues: Fumarate reductase (cytochrome) (571 aa).

Residues His8, Cys14, Cys17, His18, Cys36, Cys39, His40, His52, His58, His61, Cys68, Cys71, His72, Ala74, His75, Cys82, Cys85, His86, Asn91, and Tyr94 each coordinate heme c. The interval 118-571 (ALASAPHDTV…EEAAKYSKKN (454 aa)) is flavoprotein-like. FAD contacts are provided by Ala137, Glu156, Asn164, Ala165, Ala169, Gly170, Gly171, Gly278, and Gln338. Gly170 provides a ligand contact to succinate. Residues His365, Thr377, and Glu378 each coordinate succinate. 3 residues coordinate fumarate: Thr377, Glu378, and Arg402. Residue Arg402 is the Proton donor of the active site. Lys431 contacts heme c. A succinate-binding site is contributed by His504. His504 is a binding site for fumarate. Residues His505 and Glu534 each coordinate FAD. The succinate site is built by Arg544 and Gly547. Fumarate-binding residues include Arg544 and Gly547. Ala549 and Ile550 together coordinate FAD.

As to quaternary structure, monomer. It depends on FAD as a cofactor. Requires heme c as cofactor.

It localises to the periplasm. It carries out the reaction 2 Fe(III)-[cytochrome c] + succinate = fumarate + 2 Fe(II)-[cytochrome c] + 2 H(+). In terms of biological role, flavocytochrome that catalyzes the reduction of fumarate to succinate. Is essential for fumarate respiration during anaerobic growth, acting as the terminal reductase. Receives electrons from the membrane-bound tetraheme c-type cytochrome CymA. In vitro, can use the artificial electron donor methyl viologen. The polypeptide is Fumarate reductase (cytochrome) (fccA) (Shewanella frigidimarina).